A 308-amino-acid polypeptide reads, in one-letter code: Taste receptor type 2 member 46 (308 aa).

A topological domain (extracellular) is located at residue methionine 1. Residues isoleucine 2 to phenylalanine 22 form a helical membrane-spanning segment. At alanine 23 to glutamine 46 the chain is on the cytoplasmic side. Residues isoleucine 47–tyrosine 67 traverse the membrane as a helical segment. Residues alanine 68–asparagine 86 lie on the Extracellular side of the membrane. Residues valine 87 to leucine 107 form a helical membrane-spanning segment. The Cytoplasmic portion of the chain corresponds to leucine 108–lysine 126. A helical membrane pass occupies residues serine 127 to methionine 147. Residues asparagine 148–threonine 178 lie on the Extracellular side of the membrane. Residues asparagine 161 and asparagine 176 are each glycosylated (N-linked (GlcNAc...) asparagine). A helical transmembrane segment spans residues valine 179–isoleucine 199. The Cytoplasmic portion of the chain corresponds to cysteine 200 to glutamine 229. Residues threonine 230–tryptophan 250 traverse the membrane as a helical segment. Residues asparagine 251–proline 258 are Extracellular-facing. Residues valine 259–isoleucine 279 form a helical membrane-spanning segment. At tryptophan 280–proline 308 the chain is on the cytoplasmic side.

The protein belongs to the G-protein coupled receptor T2R family.

It is found in the membrane. It localises to the cell projection. The protein localises to the cilium membrane. Its function is as follows. Receptor that may play a role in the perception of bitterness and is gustducin-linked. May play a role in sensing the chemical composition of the gastrointestinal content. The activity of this receptor may stimulate alpha gustducin, mediate PLC-beta-2 activation and lead to the gating of TRPM5. In airway epithelial cells, binding of bitter compounds increases the intracellular calcium ion concentration and stimulates ciliary beat frequency. The protein is Taste receptor type 2 member 46 (TAS2R46) of Macaca mulatta (Rhesus macaque).